Reading from the N-terminus, the 204-residue chain is Large ribosomal subunit protein eL15 (204 aa).

This sequence belongs to the eukaryotic ribosomal protein eL15 family. As to quaternary structure, component of the large ribosomal subunit.

Its subcellular location is the cytoplasm. Its function is as follows. Component of the large ribosomal subunit. The ribosome is a large ribonucleoprotein complex responsible for the synthesis of proteins in the cell. The protein is Large ribosomal subunit protein eL15 (rpl15) of Hypophthalmichthys molitrix (Silver carp).